The primary structure comprises 208 residues: ATP phosphoribosyltransferase (208 aa).

It belongs to the ATP phosphoribosyltransferase family. Short subfamily. Heteromultimer composed of HisG and HisZ subunits.

It localises to the cytoplasm. It carries out the reaction 1-(5-phospho-beta-D-ribosyl)-ATP + diphosphate = 5-phospho-alpha-D-ribose 1-diphosphate + ATP. It participates in amino-acid biosynthesis; L-histidine biosynthesis; L-histidine from 5-phospho-alpha-D-ribose 1-diphosphate: step 1/9. Its function is as follows. Catalyzes the condensation of ATP and 5-phosphoribose 1-diphosphate to form N'-(5'-phosphoribosyl)-ATP (PR-ATP). Has a crucial role in the pathway because the rate of histidine biosynthesis seems to be controlled primarily by regulation of HisG enzymatic activity. The chain is ATP phosphoribosyltransferase from Oceanobacillus iheyensis (strain DSM 14371 / CIP 107618 / JCM 11309 / KCTC 3954 / HTE831).